A 168-amino-acid polypeptide reads, in one-letter code: Alkyl hydroperoxide reductase C (168 aa).

The Thioredoxin domain occupies 1–138 (EFIEVSEESF…LVNKIKAAQY (138 aa)). Catalysis depends on Cys28, which acts as the Cysteine sulfenic acid (-SOH) intermediate.

Belongs to the peroxiredoxin family. AhpC/Prx1 subfamily. As to quaternary structure, homodimer; disulfide-linked, upon oxidation. 5 homodimers assemble to form a ring-like decamer.

The protein resides in the cytoplasm. The catalysed reaction is a hydroperoxide + NADH + H(+) = an alcohol + NAD(+) + H2O. Thiol-specific peroxidase that catalyzes the reduction of hydrogen peroxide and organic hydroperoxides to water and alcohols, respectively. Plays a role in cell protection against oxidative stress by detoxifying peroxides. The protein is Alkyl hydroperoxide reductase C of Ferdinandcohnia aciditolerans (strain JCM 32973 / CCTCC AB 2017280 / YN-1) (Bacillus aciditolerans).